The sequence spans 231 residues: Platelet-activating factor acetylhydrolase IB subunit alpha1 (231 aa).

Residue serine 2 is modified to N-acetylserine. A Phosphoserine modification is found at serine 2. Catalysis depends on residues serine 47, aspartate 192, and histidine 195.

Belongs to the 'GDSL' lipolytic enzyme family. Platelet-activating factor acetylhydrolase IB beta/gamma subunits subfamily. Forms a catalytic dimer which is either homodimer (alpha1/alpha1 homodimer) or heterodimer with PAFAH1B2 (alpha1/alpha2 heterodimer). Component of the cytosolic (PAF-AH (I)) heterotetrameric enzyme, which is composed of PAFAH1B1 (beta), PAFAH1B2 (alpha2) and PAFAH1B3 (alpha1) subunits. The catalytic activity of the enzyme resides in the alpha1 (PAFAH1B3) and alpha2 (PAFAH1B2) subunits, whereas the beta subunit (PAFAH1B1) has regulatory activity. Trimer formation is not essential for the catalytic activity. Interacts with VLDLR; this interaction may modulate the Reelin pathway.

The protein localises to the cytoplasm. It catalyses the reaction a 1-O-alkyl-2-acetyl-sn-glycero-3-phosphocholine + H2O = a 1-O-alkyl-sn-glycero-3-phosphocholine + acetate + H(+). The catalysed reaction is 1-O-hexadecyl-2-acetyl-sn-glycero-3-phosphocholine + H2O = 1-O-hexadecyl-sn-glycero-3-phosphocholine + acetate + H(+). The enzyme catalyses 1-O-hexadecyl-2-acetyl-sn-glycero-3-phosphate + H2O = 1-O-hexadecyl-sn-glycero-3-phosphate + acetate + H(+). Its activity is regulated as follows. Beta subunit (PAFAH1B1) inhibits the acetylhydrolase activity of the alpha1/alpha1 catalytic homodimer. Its function is as follows. Alpha1 catalytic subunit of the cytosolic type I platelet-activating factor (PAF) acetylhydrolase (PAF-AH (I)) heterotetrameric enzyme that catalyzes the hydrolyze of the acetyl group at the sn-2 position of PAF and its analogs and modulates the action of PAF. The activity and substrate specificity of PAF-AH (I) are affected by its subunit composition. Both alpha1/alpha1 homodimer (PAFAH1B3/PAFAH1B3 homodimer) and alpha1/alpha2 heterodimer(PAFAH1B3/PAFAH1B2 heterodimer) hydrolyze 1-O-alkyl-2-acetyl-sn-glycero-3-phosphoric acid (AAGPA) more efficiently than PAF, but they have little hydrolytic activity towards 1-O-alkyl-2-acetyl-sn-glycero-3-phosphorylethanolamine (AAGPE). Plays an important role during the development of brain. This Pongo abelii (Sumatran orangutan) protein is Platelet-activating factor acetylhydrolase IB subunit alpha1.